A 4262-amino-acid polypeptide reads, in one-letter code: Polyketide synthase PksM (4262 aa).

The N-terminal hotdog fold 1 stretch occupies residues 1-114 (MITEQLHISL…ADMHRKEQTA (114 aa)). The PKS/mFAS DH 1 domain maps to 1-271 (MITEQLHISL…GKSVRNMSAF (271 aa)). His-18 acts as the Proton acceptor; for dehydratase activity 1 in catalysis. Residues 129 to 271 (DRILNLDEIY…GKSVRNMSAF (143 aa)) are C-terminal hotdog fold 1. Catalysis depends on Asp-190, which acts as the Proton donor; for dehydratase activity 1. A Carrier 1 domain is found at 293–367 (PAFEMYLRQL…ELAAHLADHY (75 aa)). Residue Ser-327 is modified to O-(pantetheine 4'-phosphoryl)serine. A Ketosynthase family 3 (KS3) 1 domain is found at 393 to 831 (GEDIAIIGMA…GSNAHLILEE (439 aa)). Catalysis depends on for beta-ketoacyl synthase 1 activity residues Cys-569, His-704, and His-744. An N-terminal hotdog fold 2 region spans residues 1009 to 1135 (HPLVHRNTSD…GRAVISDEAE (127 aa)). Residues 1009–1301 (HPLVHRNTSD…MRALDGEQHS (293 aa)) form the PKS/mFAS DH 2 domain. The active-site Proton acceptor; for dehydratase activity 2 is the His-1038. Residues 1149–1301 (SLDTVTSEQC…MRALDGEQHS (153 aa)) form a C-terminal hotdog fold 2 region. Asp-1211 (proton donor; for dehydratase activity 2) is an active-site residue. A Carrier 2 domain is found at 2188 to 2261 (EKSTEYMKKL…ALVEHFIKTK (74 aa)). An O-(pantetheine 4'-phosphoryl)serine modification is found at Ser-2222. Residues 2275–2291 (VQQHTPAESRTQSSQKP) show a composition bias toward polar residues. The interval 2275–2313 (VQQHTPAESRTQSSQKPDQAAKRTRRFRKLGFSGEKETP) is disordered. The Ketosynthase family 3 (KS3) 2 domain maps to 2319-2734 (SRDVAVIGIS…GSNAHIILEE (416 aa)). Residues Cys-2476, His-2611, and His-2651 each act as for beta-ketoacyl synthase 2 activity in the active site. Residues 2750–2826 (ALIVLSAKNM…DFIENKADSL (77 aa)) adopt a coiled-coil conformation. The Carrier 3 domain occupies 3409–3486 (SIEKRLEHDL…ELISFFLTDH (78 aa)). The residue at position 3446 (Ser-3446) is an O-(pantetheine 4'-phosphoryl)serine. The Ketosynthase family 3 (KS3) 3 domain maps to 3529–3944 (DEPIAIIGMS…GTNAHAVIEE (416 aa)). Residues Cys-3690, His-3825, and His-3865 each act as for beta-ketoacyl synthase 3 activity in the active site. Positions 4004 to 4033 (KAMEARLAIVANNQEQLVRKLKEYVEAMKN) form a coiled coil. The 78-residue stretch at 4135–4212 (NGKTHIQKII…ALSDHLALKA (78 aa)) folds into the Carrier 4 domain. The residue at position 4172 (Ser-4172) is an O-(pantetheine 4'-phosphoryl)serine.

Pantetheine 4'-phosphate is required as a cofactor.

It localises to the cytoplasm. It participates in antibiotic biosynthesis; bacillaene biosynthesis. Functionally, involved in some intermediate steps for the synthesis of the antibiotic polyketide bacillaene which is involved in secondary metabolism. This Bacillus subtilis (strain 168) protein is Polyketide synthase PksM (pksM).